The primary structure comprises 338 residues: Serpentine receptor class alpha-32 (338 aa).

The next 7 membrane-spanning stretches (helical) occupy residues 30-50, 63-83, 120-140, 152-172, 199-219, 249-269, and 289-309; these read VYVIYIDLVLILALFLSIHAI, ITHLLIASLVYGNVHNASYTI, RFLFIAIELALNVDRIIVILF, GEILNILAVILSFALGCLLHL, LTSYTILSACCAALDFLMMWY, LNSLLQLFVTSIYAISMFVLA, and TTPYSTLLVPIQIKVFIQWIG.

This sequence belongs to the nematode receptor-like protein sra family.

The protein localises to the membrane. The sequence is that of Serpentine receptor class alpha-32 (sra-32) from Caenorhabditis elegans.